The primary structure comprises 87 residues: Homeotic protein ultrabithorax (87 aa).

Positions 22-27 (FYPWMA) match the Antp-type hexapeptide motif.

Belongs to the Antp homeobox family. As to expression, in the embryo, expression is seen in the epidermis, somatic and visceral mesoderm, and the peripheral and central nervous system.

It is found in the nucleus. Its function is as follows. Sequence-specific transcription factor which is part of a developmental regulatory system that provides cells with specific positional identities on the anterior-posterior axis. Binds the consensus region 5'-TTAAT[GT][GA]-3'. This homeotic protein controls development of the cells in the posterior thoracic and first abdominal segments. It activates the synthesis of the decapentaplegic (DPP) growth factor. This Drosophila virilis (Fruit fly) protein is Homeotic protein ultrabithorax (Ubx).